The chain runs to 525 residues: MSNIHDHKILILDFGSQYTQLIARRIREIGVYCELWAWDVSEAQIREFAPNGIILAGGPESVTADNSPRAPEYVFNAGVPVLGICYGMQTMSEQLGGKVIQGVGEGEFGYAQIELQTTSALFKSIEDAVSAEGKPLLDVWMSHGDKVSAIPDGFVTVAKTATCPFAAMANEEKGFYGVQFHPEVTHTRQGQRMLEHFALDICGCKANWKPSSIIEDAIERLKKQIGDDEVILGLSGGVDSSVVAMLLHRAIGDKLTCVFVDNGLLRLNEAEQVLEMFGDHFGLNIVHVDAENRFLDAMAGEAEPEAKRKIIGRVFVEIFDEESKKCANAKWLAQGTIYPDVIESAGSATGKAHVIKSHHNVGGLPADMKMGLVEPLRELFKDEVRKIGLELGLPYNMLYRHPFPGPGLGVRVLGEVKKEYCDLLRSADAIFIEELHKADLYNKVSQAFTVFLPVRSVGVMGDGRKYDWVVSLRAVETIDFMTAHWAHLPYDFLGRVSNRIINEVDGISRVVYDISGKPPATIEWE.

The Glutamine amidotransferase type-1 domain occupies 8–207 (KILILDFGSQ…ALDICGCKAN (200 aa)). Cysteine 85 functions as the Nucleophile in the catalytic mechanism. Active-site residues include histidine 181 and glutamate 183. A GMPS ATP-PPase domain is found at 208–400 (WKPSSIIEDA…LGLPYNMLYR (193 aa)). 235-241 (SGGVDSS) serves as a coordination point for ATP.

Homodimer.

It catalyses the reaction XMP + L-glutamine + ATP + H2O = GMP + L-glutamate + AMP + diphosphate + 2 H(+). The protein operates within purine metabolism; GMP biosynthesis; GMP from XMP (L-Gln route): step 1/1. In terms of biological role, catalyzes the synthesis of GMP from XMP. In Shewanella frigidimarina (strain NCIMB 400), this protein is GMP synthase [glutamine-hydrolyzing].